The sequence spans 241 residues: Protein McbE (241 aa).

6 consecutive transmembrane segments (helical) span residues 17 to 35 (TPFSLIWTIMSPTVLFFFL), 54 to 72 (ISWFVGYISFSVVLFNYCL), 105 to 123 (LIMSILYVFFFILVVLTGF), 131 to 149 (IVMIILKSIYINAFMMVSL), 163 to 181 (STIYSVLITVCMVSGIVSL), and 212 to 230 (LMTIFFYSIMLIISIISAL).

It is found in the cell membrane. Functionally, together with two further proteins McbF and McbG this protein causes immunity to the peptide antibiotic microcin B17 (MccB17), which inhibits DNA replication in enterobacteriaceae. Immunity is determined by two different mechanisms. McbE is involved in the production of extracellular MccB17 and, in a complex with McbF it also serves as 'pump' for the export of active MccB17 from the cytoplasm to the periplasmic space. This Escherichia coli protein is Protein McbE (mcbE).